The primary structure comprises 118 residues: Ribonuclease P protein component (118 aa).

This sequence belongs to the RnpA family. As to quaternary structure, consists of a catalytic RNA component (M1 or rnpB) and a protein subunit.

The enzyme catalyses Endonucleolytic cleavage of RNA, removing 5'-extranucleotides from tRNA precursor.. RNaseP catalyzes the removal of the 5'-leader sequence from pre-tRNA to produce the mature 5'-terminus. It can also cleave other RNA substrates such as 4.5S RNA. The protein component plays an auxiliary but essential role in vivo by binding to the 5'-leader sequence and broadening the substrate specificity of the ribozyme. The polypeptide is Ribonuclease P protein component (Rickettsia conorii (strain ATCC VR-613 / Malish 7)).